A 367-amino-acid polypeptide reads, in one-letter code: Phthiodiolone/phenolphthiodiolone dimycocerosates ketoreductase (367 aa).

Belongs to the mer family. Phthiodiolone/phenolphthiodiolone dimycocerosates ketoreductase subfamily.

In terms of biological role, catalyzes the reduction of the keto moiety of phthiodiolone dimycocerosates (DIM B) and glycosylated phenolphthiodiolone dimycocerosates to form the intermediate compounds phthiotriol and glycosylated phenolphthiotriol dimycocerosates during phthiocerol dimycocerosates (DIM A) and glycosylated phenolphthiocerol dimycocerosates (PGL) biosynthesis. In Mycobacterium kansasii, this protein is Phthiodiolone/phenolphthiodiolone dimycocerosates ketoreductase.